Reading from the N-terminus, the 425-residue chain is Glucose-6-phosphate 1-dehydrogenase (425 aa).

Arginine 44 and lysine 135 together coordinate NADP(+). 4 residues coordinate substrate: histidine 165, lysine 169, glutamate 201, and aspartate 220. The active-site Proton acceptor is histidine 225. Lysine 311 provides a ligand contact to substrate.

Belongs to the glucose-6-phosphate dehydrogenase family.

The enzyme catalyses D-glucose 6-phosphate + NADP(+) = 6-phospho-D-glucono-1,5-lactone + NADPH + H(+). It functions in the pathway carbohydrate degradation; pentose phosphate pathway; D-ribulose 5-phosphate from D-glucose 6-phosphate (oxidative stage): step 1/3. Functionally, catalyzes the oxidation of glucose 6-phosphate to 6-phosphogluconolactone. The polypeptide is Glucose-6-phosphate 1-dehydrogenase (Helicobacter pylori (strain ATCC 700392 / 26695) (Campylobacter pylori)).